The primary structure comprises 81 residues: Sulfur carrier protein TusA (81 aa).

C19 (cysteine persulfide intermediate) is an active-site residue.

The protein belongs to the sulfur carrier protein TusA family.

The protein resides in the cytoplasm. Functionally, sulfur carrier protein which probably makes part of a sulfur-relay system. In Shewanella woodyi (strain ATCC 51908 / MS32), this protein is Sulfur carrier protein TusA.